Reading from the N-terminus, the 194-residue chain is ATP-dependent Clp protease proteolytic subunit (194 aa).

Serine 97 acts as the Nucleophile in catalysis. Histidine 122 is a catalytic residue.

This sequence belongs to the peptidase S14 family. As to quaternary structure, fourteen ClpP subunits assemble into 2 heptameric rings which stack back to back to give a disk-like structure with a central cavity, resembling the structure of eukaryotic proteasomes.

The protein localises to the cytoplasm. The catalysed reaction is Hydrolysis of proteins to small peptides in the presence of ATP and magnesium. alpha-casein is the usual test substrate. In the absence of ATP, only oligopeptides shorter than five residues are hydrolyzed (such as succinyl-Leu-Tyr-|-NHMec, and Leu-Tyr-Leu-|-Tyr-Trp, in which cleavage of the -Tyr-|-Leu- and -Tyr-|-Trp bonds also occurs).. Functionally, cleaves peptides in various proteins in a process that requires ATP hydrolysis. Has a chymotrypsin-like activity. Plays a major role in the degradation of misfolded proteins. This is ATP-dependent Clp protease proteolytic subunit from Lactobacillus helveticus (strain DPC 4571).